A 536-amino-acid polypeptide reads, in one-letter code: MFS-type efflux pump MFS1 (536 aa).

Transmembrane regions (helical) follow at residues valine 30–alanine 50, tyrosine 80–valine 100, and tryptophan 102–proline 122. N-linked (GlcNAc...) asparagine glycosylation is present at asparagine 123. Helical transmembrane passes span valine 133 to isoleucine 153, glycine 163 to phenylalanine 183, and tryptophan 191 to leucine 211. N-linked (GlcNAc...) asparagine glycosylation is present at asparagine 221. The next 8 membrane-spanning stretches (helical) occupy residues isoleucine 234–glycine 254, isoleucine 264–arginine 284, phenylalanine 306–phenylalanine 326, isoleucine 342–isoleucine 362, alanine 366–phenylalanine 386, isoleucine 400–valine 420, valine 426–serine 446, and threonine 503–tryptophan 523.

The protein belongs to the major facilitator superfamily. TCR/Tet family.

It localises to the cell membrane. MFS-type efflux pump involved in the modulation susceptibility to azoles, including fluconazole, itraconazole, miconazole and voriconazole. Also confers increased resistance chloramphenicol and thiamphenicol, suggesting that it acts as a pleiotropic drug transporter with a broad substrate spectrum. Finally, increases the tolerance to cycloheximide when expressed in S.cerevisiae, but not in dermatophyte species. In Arthroderma benhamiae (strain ATCC MYA-4681 / CBS 112371) (Trichophyton mentagrophytes), this protein is MFS-type efflux pump MFS1.